The following is a 91-amino-acid chain: Small ribosomal subunit protein bS16 (91 aa).

It belongs to the bacterial ribosomal protein bS16 family.

This chain is Small ribosomal subunit protein bS16, found in Exiguobacterium sp. (strain ATCC BAA-1283 / AT1b).